The chain runs to 339 residues: Uroporphyrinogen decarboxylase (339 aa).

Residues 21 to 25, Asp-71, Tyr-146, Ser-201, and His-316 each bind substrate; that span reads RQAGR.

The protein belongs to the uroporphyrinogen decarboxylase family. In terms of assembly, homodimer.

It is found in the cytoplasm. It catalyses the reaction uroporphyrinogen III + 4 H(+) = coproporphyrinogen III + 4 CO2. Its pathway is porphyrin-containing compound metabolism; protoporphyrin-IX biosynthesis; coproporphyrinogen-III from 5-aminolevulinate: step 4/4. Catalyzes the decarboxylation of four acetate groups of uroporphyrinogen-III to yield coproporphyrinogen-III. The polypeptide is Uroporphyrinogen decarboxylase (Rickettsia canadensis (strain McKiel)).